The chain runs to 1486 residues: Chromosome partition protein MukB (1486 aa).

Gly34–Ser41 lines the ATP pocket. Coiled coils occupy residues Leu326–Gln418, Leu444–Gln480, and Arg509–Val603. Residues Pro666 to Arg783 are flexible hinge. Coiled-coil stretches lie at residues Glu835 to Glu923, Glu977 to Ala1115, and Val1209 to Ser1266.

This sequence belongs to the SMC family. MukB subfamily. As to quaternary structure, homodimerization via its hinge domain. Binds to DNA via its C-terminal region. Interacts, and probably forms a ternary complex, with MukE and MukF via its C-terminal region. The complex formation is stimulated by calcium or magnesium. Interacts with tubulin-related protein FtsZ.

The protein localises to the cytoplasm. Its subcellular location is the nucleoid. Functionally, plays a central role in chromosome condensation, segregation and cell cycle progression. Functions as a homodimer, which is essential for chromosome partition. Involved in negative DNA supercoiling in vivo, and by this means organize and compact chromosomes. May achieve or facilitate chromosome segregation by condensation DNA from both sides of a centrally located replisome during cell division. The chain is Chromosome partition protein MukB from Escherichia fergusonii (strain ATCC 35469 / DSM 13698 / CCUG 18766 / IAM 14443 / JCM 21226 / LMG 7866 / NBRC 102419 / NCTC 12128 / CDC 0568-73).